Here is a 469-residue protein sequence, read N- to C-terminus: Argininosuccinate lyase (469 aa).

This sequence belongs to the lyase 1 family. Argininosuccinate lyase subfamily.

It is found in the cytoplasm. The enzyme catalyses 2-(N(omega)-L-arginino)succinate = fumarate + L-arginine. The protein operates within amino-acid biosynthesis; L-arginine biosynthesis; L-arginine from L-ornithine and carbamoyl phosphate: step 3/3. The protein is Argininosuccinate lyase of Burkholderia cenocepacia (strain ATCC BAA-245 / DSM 16553 / LMG 16656 / NCTC 13227 / J2315 / CF5610) (Burkholderia cepacia (strain J2315)).